The sequence spans 283 residues: Large ribosomal subunit protein uL2c (283 aa).

Residues 229 to 274 form a disordered region; sequence GVVMNPIDHPHGGGEGKVPIGRKKPLTPWGHPALGRKSRKRRKYSD. Residues 262-271 show a composition bias toward basic residues; sequence LGRKSRKRRK.

This sequence belongs to the universal ribosomal protein uL2 family. As to quaternary structure, part of the 50S ribosomal subunit.

It is found in the plastid. This chain is Large ribosomal subunit protein uL2c (rpl2), found in Aneura mirabilis (Parasitic liverwort).